Consider the following 573-residue polypeptide: DNA ligase (573 aa).

Glutamate 250 serves as a coordination point for ATP. Lysine 252 acts as the N6-AMP-lysine intermediate in catalysis. The ATP site is built by arginine 257, arginine 272, glutamate 301, phenylalanine 342, arginine 432, and lysine 438.

The protein belongs to the ATP-dependent DNA ligase family. It depends on Mg(2+) as a cofactor.

The catalysed reaction is ATP + (deoxyribonucleotide)n-3'-hydroxyl + 5'-phospho-(deoxyribonucleotide)m = (deoxyribonucleotide)n+m + AMP + diphosphate.. DNA ligase that seals nicks in double-stranded DNA during DNA replication, DNA recombination and DNA repair. The polypeptide is DNA ligase (Methanococcus maripaludis (strain C7 / ATCC BAA-1331)).